The primary structure comprises 162 residues: Endoribonuclease YbeY (162 aa).

Zn(2+) contacts are provided by His128, His132, and His138.

Belongs to the endoribonuclease YbeY family. Zn(2+) is required as a cofactor.

It localises to the cytoplasm. Its function is as follows. Single strand-specific metallo-endoribonuclease involved in late-stage 70S ribosome quality control and in maturation of the 3' terminus of the 16S rRNA. The sequence is that of Endoribonuclease YbeY from Levilactobacillus brevis (strain ATCC 367 / BCRC 12310 / CIP 105137 / JCM 1170 / LMG 11437 / NCIMB 947 / NCTC 947) (Lactobacillus brevis).